Here is a 424-residue protein sequence, read N- to C-terminus: Probable methyltransferase EP424R (424 aa).

An Adrift-type SAM-dependent 2'-O-MTase domain is found at 103–315 (QIVTNAWLKM…TYIVGKNRLR (213 aa)). Residues G135 and D228 each contribute to the S-adenosyl-L-methionine site. The active-site Proton acceptor is the K268.

It localises to the virion. In Ornithodoros (relapsing fever ticks), this protein is Probable methyltransferase EP424R.